Here is a 142-residue protein sequence, read N- to C-terminus: Large ribosomal subunit protein uL13 (142 aa).

Belongs to the universal ribosomal protein uL13 family. In terms of assembly, part of the 50S ribosomal subunit.

Functionally, this protein is one of the early assembly proteins of the 50S ribosomal subunit, although it is not seen to bind rRNA by itself. It is important during the early stages of 50S assembly. This Psychrobacter cryohalolentis (strain ATCC BAA-1226 / DSM 17306 / VKM B-2378 / K5) protein is Large ribosomal subunit protein uL13.